Consider the following 322-residue polypeptide: Secreted RxLR effector protein RXLR-C17 (322 aa).

The signal sequence occupies residues 1-25 (MREPAFSFRLHLFAAMILLVDVFSA). The RxLR-dEER signature appears at 43–62 (RQLRARDSQAKNYVIRDEER). The N-linked (GlcNAc...) asparagine glycan is linked to asparagine 73.

It belongs to the RxLR effector family.

It is found in the secreted. The protein resides in the host cytoplasm. The protein localises to the host nucleus. Its function is as follows. Secreted effector that suppresses pattern-triggered immunity (PTI) in plant host. This chain is Secreted RxLR effector protein RXLR-C17, found in Plasmopara halstedii (Downy mildew of sunflower).